The following is a 753-amino-acid chain: Striatin-4 (753 aa).

The tract at residues 10–65 (VAAAASSCRPLGSGAGPGPTGAAPVSAPAPGPGPAGKGGGGGGSPGPTAGPEPLSL) is disordered. The segment covering 43–54 (PAGKGGGGGGSP) has biased composition (gly residues). Serine 53 carries the phosphoserine modification. Residues 69 to 136 (LHFIQHEWAR…QERAKYHKLK (68 aa)) adopt a coiled-coil conformation. The caveolin-binding stretch occupies residues 71–79 (FIQHEWARF). The segment at 165-182 (ENSPLVWKEGRQLLRQYL) is calmodulin-binding. The residue at position 206 (serine 206) is a Phosphoserine. Disordered stretches follow at residues 213 to 232 (VEPS…LSGG), 271 to 345 (CEDE…SPHE), and 363 to 382 (VDGL…QPRP). Composition is skewed to acidic residues over residues 271 to 283 (CEDE…DELD) and 302 to 317 (EMED…DAIN). Serine 276 is subject to Phosphoserine. A compositionally biased stretch (basic and acidic residues) spans 332-345 (PDPRRCTVDGSPHE). Residues 370-380 (VTGPPPGTPQP) show a composition bias toward pro residues. WD repeat units follow at residues 436-475 (SHYD…TAKK), 489-528 (AHRG…MDPY), 542-581 (GHGD…PACL), 587-628 (ASEH…ALLT), 635-674 (SGPT…PVHS), 677-716 (AHLD…CVQE), and 723-753 (KHEE…KVFV).

Belongs to the WD repeat striatin family. As to quaternary structure, part of the core of STRIPAK complexes composed of PP2A catalytic and scaffolding subunits, the striatins (PP2A regulatory subunits), the striatin-associated proteins MOB4, STRIP1 and STRIP2, PDCD10 and members of the STE20 kinases, such as STK24 and STK26. Interacts with CTTNBP2NL.

The protein localises to the cytoplasm. Calmodulin-binding scaffolding protein which is the center of the striatin-interacting phosphatase and kinase (STRIPAK) complexes. STRIPAK complexes have critical roles in protein (de)phosphorylation and are regulators of multiple signaling pathways including Hippo, MAPK, nuclear receptor and cytoskeleton remodeling. Different types of STRIPAK complexes are involved in a variety of biological processes such as cell growth, differentiation, apoptosis, metabolism and immune regulation. Key regulator of the expanded Hippo signaling pathway by interacting and allowing the inhibition of MAP4K kinases by the STRIPAK complex. The polypeptide is Striatin-4 (Homo sapiens (Human)).